A 177-amino-acid chain; its full sequence is Large ribosomal subunit protein uL22 (177 aa).

The tract at residues 118–177 is disordered; that stretch reads VESRPSREGRRGGAGESAGGARARRAQGSKAAAAKKAPASSSKKAATTTEASEEAKGGSQ. Residues 121–130 show a composition bias toward basic and acidic residues; the sequence is RPSREGRRGG. A compositionally biased stretch (low complexity) spans 145 to 167; the sequence is GSKAAAAKKAPASSSKKAATTTE.

Belongs to the universal ribosomal protein uL22 family. As to quaternary structure, part of the 50S ribosomal subunit.

Functionally, this protein binds specifically to 23S rRNA; its binding is stimulated by other ribosomal proteins, e.g. L4, L17, and L20. It is important during the early stages of 50S assembly. It makes multiple contacts with different domains of the 23S rRNA in the assembled 50S subunit and ribosome. Its function is as follows. The globular domain of the protein is located near the polypeptide exit tunnel on the outside of the subunit, while an extended beta-hairpin is found that lines the wall of the exit tunnel in the center of the 70S ribosome. This chain is Large ribosomal subunit protein uL22, found in Mycobacterium sp. (strain KMS).